We begin with the raw amino-acid sequence, 333 residues long: Ribosomal RNA small subunit methyltransferase H (333 aa).

S-adenosyl-L-methionine is bound by residues 42–44, Asp62, Phe86, Asp105, and Gln112; that span reads GGH.

The protein belongs to the methyltransferase superfamily. RsmH family.

Its subcellular location is the cytoplasm. It carries out the reaction cytidine(1402) in 16S rRNA + S-adenosyl-L-methionine = N(4)-methylcytidine(1402) in 16S rRNA + S-adenosyl-L-homocysteine + H(+). Specifically methylates the N4 position of cytidine in position 1402 (C1402) of 16S rRNA. The protein is Ribosomal RNA small subunit methyltransferase H of Cupriavidus necator (strain ATCC 17699 / DSM 428 / KCTC 22496 / NCIMB 10442 / H16 / Stanier 337) (Ralstonia eutropha).